Here is a 291-residue protein sequence, read N- to C-terminus: Tumor necrosis factor ligand superfamily member 10 (291 aa).

Over 1-17 (MPSSGALKDLSFSQHFR) the chain is Cytoplasmic. The helical; Signal-anchor for type II membrane protein transmembrane segment at 18-38 (MMVICIVLLQVLLQAVSVAVT) threads the bilayer. The Extracellular segment spans residues 39–291 (YMYFTNEMKQ…ASFFGAFLIN (253 aa)). A glycan (N-linked (GlcNAc...) asparagine) is linked at Asn-52. Residues 126 to 290 (VAAHITGITR…EASFFGAFLI (165 aa)) enclose the THD domain. Cys-240 is a binding site for Zn(2+).

The protein belongs to the tumor necrosis factor family. Homotrimer. One TNFSF10 homotrimer interacts with three TNFSF10A mononers. One TNFSF10 homotrimer interacts with three TNFSF10B mononers. In terms of processing, tyrosine phosphorylated by PKDCC/VLK. In terms of tissue distribution, widespread.

Its subcellular location is the cell membrane. It localises to the secreted. Cytokine that binds to TNFRSF10A/TRAILR1, TNFRSF10B/TRAILR2, TNFRSF10C/TRAILR3, TNFRSF10D/TRAILR4 and possibly also to TNFRSF11B/OPG. Induces apoptosis. Its activity may be modulated by binding to the decoy receptors TNFRSF10C/TRAILR3, TNFRSF10D/TRAILR4 and TNFRSF11B/OPG that cannot induce apoptosis. This is Tumor necrosis factor ligand superfamily member 10 (Tnfsf10) from Mus musculus (Mouse).